The sequence spans 1249 residues: Calmodulin-regulated spectrin-associated protein 3 (1249 aa).

Disordered regions lie at residues 183–205 (KTEQ…APAQ), 328–385 (PDGH…SMSH), 430–457 (VSSD…GDLP), 473–609 (LLPD…RLEE), 632–696 (LGKS…HEGL), 714–1029 (QRDM…SALA), and 1061–1111 (NNLG…TGPR). Threonine 184 is subject to Phosphothreonine. Over residues 189 to 205 (AQRASPAAPADGAAPAQ) the composition is skewed to low complexity. Position 193 is a phosphoserine (serine 193). Residues 203–312 (PAQPSIRYRK…LVVMLAELFM (110 aa)) form the Calponin-homology (CH) domain. A phosphoserine mark is found at serine 334, serine 341, serine 347, serine 351, serine 368, serine 373, and serine 382. Residues 341-352 (SPPQNNSGSSSP) show a composition bias toward low complexity. A compositionally biased stretch (polar residues) spans 364 to 383 (GGPQSPLRGSTGSLKSSPSM). Residues 437 to 454 (PPRPAPARTPTQPPPEPG) are compositionally biased toward pro residues. A phosphoserine mark is found at serine 547, serine 554, and serine 560. The span at 568–579 (AERKKQLVKAEA) shows a compositional bias: basic and acidic residues. Over residues 594–604 (EALSSEMSELS) the composition is skewed to low complexity. The stretch at 594 to 628 (EALSSEMSELSARLEEKRRAIEAQKRRIEAIFAKH) forms a coiled coil. Acidic residues predominate over residues 647–657 (GEAEAEAEEAD). Phosphoserine is present on serine 685. Positions 696 to 729 (LGEYNRAVSKLSAALSSLQRDMQRLTDQQQRLLA) form a coiled coil. Residues 731 to 741 (PEAPGSAPPPA) show a composition bias toward pro residues. The segment covering 754–779 (AASPSPARRVPATRRSPGPGPSQSPR) has biased composition (low complexity). Serine 769 carries the post-translational modification Phosphoserine. Phosphothreonine is present on threonine 799. Residue serine 814 is modified to Phosphoserine. Over residues 814 to 825 (SPSQVPVQTRSS) the composition is skewed to polar residues. Residues 889 to 940 (YKDEDKPEDEMAQKRASLLERQQRRAEEARRRKQWQEVEKEQRREEAARLAQ) are compositionally biased toward basic and acidic residues. Positions 896–935 (EDEMAQKRASLLERQQRRAEEARRRKQWQEVEKEQRREEA) form a coiled coil. Positions 950–964 (VSAVPMATPAPAARA) are enriched in low complexity. The segment covering 970-998 (VGPRKGDFTRQEYERRAQLKLMDDLDKVL) has biased composition (basic and acidic residues). Phosphoserine is present on serine 1074. Residues 1109–1243 (GPRLYKEPSA…QGKKPTTPKK (135 aa)) enclose the CKK domain.

The protein belongs to the CAMSAP1 family. As to quaternary structure, interacts with PLEKHA7. Interacts with CAMSAP2. Interacts with KATNA1 and KATNB1; leading to regulate the length of CAMSAP3-decorated microtubule stretches. Interacts with AKAP9; regulating Golgi assembly in epithelial cells. Interacts with MACF1. Interacts with AKNA.

The protein localises to the cytoplasm. The protein resides in the cytoskeleton. It localises to the cell junction. It is found in the adherens junction. Its subcellular location is the cilium axoneme. The protein localises to the cilium basal body. Its function is as follows. Key microtubule-organizing protein that specifically binds the minus-end of non-centrosomal microtubules and regulates their dynamics and organization. Specifically recognizes growing microtubule minus-ends and autonomously decorates and stabilizes microtubule lattice formed by microtubule minus-end polymerization. Acts on free microtubule minus-ends that are not capped by microtubule-nucleating proteins or other factors and protects microtubule minus-ends from depolymerization. In addition, it also reduces the velocity of microtubule polymerization. Required for the biogenesis and the maintenance of zonula adherens by anchoring the minus-end of microtubules to zonula adherens and by recruiting the kinesin KIFC3 to those junctional sites. Required for orienting the apical-to-basal polarity of microtubules in epithelial cells: acts by tethering non-centrosomal microtubules to the apical cortex, leading to their longitudinal orientation. Plays a key role in early embryos, which lack centrosomes: accumulates at the microtubule bridges that connect pairs of cells and enables the formation of a non-centrosomal microtubule-organizing center that directs intracellular transport in the early embryo. Couples non-centrosomal microtubules with actin: interaction with MACF1 at the minus ends of non-centrosomal microtubules, tethers the microtubules to actin filaments, regulating focal adhesion size and cell migration. Plays a key role in the generation of non-centrosomal microtubules by accumulating in the pericentrosomal region and cooperating with KATNA1 to release non-centrosomal microtubules from the centrosome. Through the microtubule cytoskeleton, also regulates the organization of cellular organelles including the Golgi and the early endosomes. Through interaction with AKAP9, involved in translocation of Golgi vesicles in epithelial cells, where microtubules are mainly non-centrosomal. Plays an important role in motile cilia function by facilitatating proper orientation of basal bodies and formation of central microtubule pairs in motile cilia. The chain is Calmodulin-regulated spectrin-associated protein 3 from Homo sapiens (Human).